Consider the following 503-residue polypeptide: UDP-N-acetylmuramate--L-alanine ligase (503 aa).

120-126 provides a ligand contact to ATP; sequence GTHGKTS.

Belongs to the MurCDEF family.

The protein localises to the cytoplasm. The catalysed reaction is UDP-N-acetyl-alpha-D-muramate + L-alanine + ATP = UDP-N-acetyl-alpha-D-muramoyl-L-alanine + ADP + phosphate + H(+). It functions in the pathway cell wall biogenesis; peptidoglycan biosynthesis. Cell wall formation. The sequence is that of UDP-N-acetylmuramate--L-alanine ligase from Rhodococcus opacus (strain B4).